Reading from the N-terminus, the 92-residue chain is MPRSLKKGPFIDLHLIKKVEAAIASNDRRPIKTWSRRSMILPEMVGLTLAVHNGRQHVPVLVNEEMVGHKLGEFAATRTYRGHAADKKAKKR.

This sequence belongs to the universal ribosomal protein uS19 family.

Its function is as follows. Protein S19 forms a complex with S13 that binds strongly to the 16S ribosomal RNA. The protein is Small ribosomal subunit protein uS19 of Cellvibrio japonicus (strain Ueda107) (Pseudomonas fluorescens subsp. cellulosa).